A 302-amino-acid polypeptide reads, in one-letter code: NAD kinase 2 (302 aa).

The active-site Proton acceptor is the Asp78. Residues 78 to 79, 152 to 153, Asp182, 193 to 198, and Ala217 each bind NAD(+); these read DG, NE, and TAYALS.

The protein belongs to the NAD kinase family. A divalent metal cation serves as cofactor.

Its subcellular location is the cytoplasm. The catalysed reaction is NAD(+) + ATP = ADP + NADP(+) + H(+). Its function is as follows. Involved in the regulation of the intracellular balance of NAD and NADP, and is a key enzyme in the biosynthesis of NADP. Catalyzes specifically the phosphorylation on 2'-hydroxyl of the adenosine moiety of NAD to yield NADP. This is NAD kinase 2 from Prochlorococcus marinus (strain MIT 9313).